The primary structure comprises 518 residues: Glutamate--cysteine ligase (518 aa).

It belongs to the glutamate--cysteine ligase type 1 family. Type 1 subfamily.

The enzyme catalyses L-cysteine + L-glutamate + ATP = gamma-L-glutamyl-L-cysteine + ADP + phosphate + H(+). It participates in sulfur metabolism; glutathione biosynthesis; glutathione from L-cysteine and L-glutamate: step 1/2. The chain is Glutamate--cysteine ligase from Buchnera aphidicola subsp. Acyrthosiphon pisum (strain 5A).